The chain runs to 258 residues: MSERQLEKSIEHAVELAREARNIEVFTGAGMSADSGLETYRDDKTGLWSNVDPQAMASIDAWRKDPEPMWAWYRWRAGVAARAEPNAGHQAISYWEGSDTVEHVHITTQNIDNLHERAGSSDVTHLHGSLFEYRCSDCATPWEDDKNYPQEPIARLAPPQCEKCGGLIRPGVVWFGENLPVEEWDIAEQRIAEADLMIIVGTSGIVHPAAALPQLAQQRGVPIVEISPTRTELSRIADFTWMSTAAQALPALMRGLSA.

The Deacetylase sirtuin-type domain occupies 3-258 (ERQLEKSIEH…LPALMRGLSA (256 aa)). Residue 28–48 (GAGMSADSGLETYRDDKTGLW) participates in NAD(+) binding. Positions 73 and 76 each coordinate substrate. NAD(+) is bound at residue 109–112 (QNID). Catalysis depends on His-127, which acts as the Proton acceptor. Positions 135, 138, 161, and 164 each coordinate Zn(2+). NAD(+)-binding positions include 201–203 (GTS) and Ala-245.

This sequence belongs to the sirtuin family. Class III subfamily. The cofactor is Zn(2+).

Its subcellular location is the cytoplasm. It carries out the reaction N(6)-acetyl-L-lysyl-[protein] + NAD(+) + H2O = 2''-O-acetyl-ADP-D-ribose + nicotinamide + L-lysyl-[protein]. The enzyme catalyses N(6)-succinyl-L-lysyl-[protein] + NAD(+) + H2O = 2''-O-succinyl-ADP-D-ribose + nicotinamide + L-lysyl-[protein]. Functionally, NAD-dependent lysine deacetylase and desuccinylase that specifically removes acetyl and succinyl groups on target proteins. Modulates the activities of several proteins which are inactive in their acylated form. This is NAD-dependent protein deacylase from Corynebacterium glutamicum (strain ATCC 13032 / DSM 20300 / JCM 1318 / BCRC 11384 / CCUG 27702 / LMG 3730 / NBRC 12168 / NCIMB 10025 / NRRL B-2784 / 534).